A 335-amino-acid chain; its full sequence is Pharynx and intestine in excess protein 1 (335 aa).

Residue Lys68 forms a Glycyl lysine isopeptide (Lys-Gly) (interchain with G-Cter in SUMO) linkage. A C3H1-type 1 zinc finger spans residues 98-126; sequence EYKTRLCDAFRREGYCPYNDNCTYAHGQD. A compositionally biased stretch (basic and acidic residues) spans 130–156; that stretch reads VPRRRQEYYSRDPPRERRDSRSRRDDV. Positions 130-188 are disordered; that stretch reads VPRRRQEYYSRDPPRERRDSRSRRDDVDTTINRSSSSASKHHDENRRPSNNHGSSNRRQ. Polar residues-rich tracts occupy residues 158–167 and 177–187; these read TTINRSSSSA and PSNNHGSSNRR. A C3H1-type 2 zinc finger spans residues 184–211; that stretch reads SNRRQICHNFERGNCRYGPRCRFIHVEQ. The tract at residues 288–291 is required for inhibition of Ser-2 phosphorylation; sequence MAPT.

In terms of assembly, interacts with hda-1, let-418 and mep-1. Interacts (via C terminus) with cit-1.1 (via C terminus). Post-translationally, sumoylated in adult germ cells.

Its subcellular location is the nucleus. It is found in the cytoplasm. The protein resides in the cytoskeleton. The protein localises to the microtubule organizing center. It localises to the centrosome. Its subcellular location is the spindle. It is found in the cytoplasmic granule. Functionally, maternally provided pie-1 is required for germline cell fate determination. Functions as a repressor of RNA polymerase II-dependent gene expression in the developing germline. Required for expression of nos-2 in P4 germline blastomere cells. Inhibits the histone deacetylase activity of hda-1. Represses transcriptional activation of cdk-9 and cit-1.1, which are members of the P-TEFb complex. Acts redundantly with gei-17 to promote piRNA-mediated silencing and fertility in adult germline. Promotes the sumoylation of hda-1 in adult animals but not in embryos thereby regulating its interaction with mep-1. This Caenorhabditis elegans protein is Pharynx and intestine in excess protein 1.